The primary structure comprises 732 residues: Segment polarity protein dishevelled homolog DVL-2 (732 aa).

Positions 1–82 constitute a DIX domain; that stretch reads MAETKVIYHL…RVVSWLVSSE (82 aa). 2 disordered regions span residues 81–181 and 195–237; these read SETS…SSST and EEDD…SSFS. Pro residues predominate over residues 98–111; the sequence is DPPPVPPPVPPPPA. Basic and acidic residues predominate over residues 146-157; that stretch reads MRRDRVRRRDST. The segment covering 202 to 213 has biased composition (polar residues); the sequence is RFSSSTEQSSAS. Positions 215 to 227 are enriched in basic residues; sequence LLKRHRRRRKQRP. One can recognise a PDZ domain in the interval 250–335; sequence TVTLNMEKYN…KPGPIILTVA (86 aa). The DEP domain maps to 424–498; it reads PESGLEVRDR…SEQCYYIFGD (75 aa). Composition is skewed to low complexity over residues 570–589, 612–629, and 637–647; these read MGSA…SNRS, KSGS…SIRR, and PPSERSTSSRP. The interval 570–660 is disordered; the sequence is MGSAGSQHSE…HPPSVHSYAA (91 aa).

It belongs to the DSH family. In terms of assembly, can form homomultimers. Interacts with prickle1. Interacts (via the PDZ domain) with ccdc88c/dal and dact1-B/dpr. Interacts (via the DIX domain) with ARP/Axin-related protein and dact1-A/frodo. Interacts with sdc4, possibly via fz7. Interacts directly (via the DEP domain) with efnb1/ephrin-B1. May interact indirectly with the phosphorylated ephrin receptors ephb1 and ephb2 via SH domain-containing adapters. Phosphorylated. Phosphorylation is controlled by frizzled proteins, correlates with the onset of embryo dorsalizing events and is higher in the dorsal half of early cleavage embryos. Phosphorylated on tyrosine residues in response to association with efnb1/ephrin-B1.

The protein localises to the cytoplasm. The protein resides in the cytoplasmic vesicle. Its subcellular location is the cell projection. It is found in the cilium. It localises to the nucleus. The protein localises to the cell membrane. Involved in at least 2 independent signaling cascades, controlling cell fate via canonical Wnt signaling and cell polarity via a planar cell polarity (PCP) cascade. Acts synergistically with dal/dapple-like to activate Wnt signaling, stabilizing ctnnb1/beta-catenin and leading to dorsal axis formation. Also prevents degradation of ctnnb1/beta-catenin by displacing gsk3 from a complex with ARP/Axin-related protein. Has an additional role in anterior-posterior (A/P) axis formation, specifying different neuroectodermal cell fates along the A/P axis in a dose-dependent manner by activating several early patterning genes. In the PCP pathway, required at the cell membrane for PCP-mediated neural and mesodermal convergent extension during gastrulation and subsequent neural tube closure, acting to activate jnk. Also involved in blastopore closure and archenteron elongation during early, but not late, gastrulation. Associates with ephrin receptors and ligands and acts as part of a downstream PCP pathway to mediate ephrin-mediated cell repulsion via activation of rhoa. Required for efnb1/ephrin-B1-driven movement of non-retinal progenitor cells into the retina during eye field formation. Patterns the hindbrain. Required for ciliogenesis. Controls the docking of basal bodies to the apical plasma membrane; mediates the activation, but not localization of rhoa at the apical surface of ciliated cells during basal body docking. Furthermore, required for the association of basal bodies with membrane-bound vesicles and the vesicle-trafficking protein exoc4/sec8, and this association is in turn required for basal body docking. Once basal bodies are docked, required for the planar polarization of basal bodies that underlies ciliary beating and the directional fluid flow across ciliated epithelia. The polypeptide is Segment polarity protein dishevelled homolog DVL-2 (Xenopus tropicalis (Western clawed frog)).